We begin with the raw amino-acid sequence, 96 residues long: Protein Vpr (96 aa).

A homooligomerization region spans residues 1 to 42; it reads MEQAPEDQGPQREPYNEWTLELLEELKSEAVRHFPRIWLHSL. Serine 79, serine 94, and serine 96 each carry phosphoserine; by host.

The protein belongs to the HIV-1 VPR protein family. In terms of assembly, homooligomer, may form homodimer. Interacts with p6-gag region of the Pr55 Gag precursor protein through a (Leu-X-X)4 motif near the C-terminus of the P6gag protein. Interacts with host UNG. May interact with host RAD23A/HHR23A. Interacts with host VPRBP/DCAF1, leading to hijack the CUL4A-RBX1-DDB1-DCAF1/VPRBP complex, mediating ubiquitination of host proteins such as TERT and ZGPAT and arrest of the cell cycle in G2 phase. In terms of processing, phosphorylated on several residues by host. These phosphorylations regulate VPR activity for the nuclear import of the HIV-1 pre-integration complex.

It is found in the virion. Its subcellular location is the host nucleus. The protein localises to the host extracellular space. Functionally, during virus replication, may deplete host UNG protein, and incude G2-M cell cycle arrest. Acts by targeting specific host proteins for degradation by the 26S proteasome, through association with the cellular CUL4A-DDB1 E3 ligase complex by direct interaction with host VPRPB/DCAF-1. Cell cycle arrest reportedly occurs within hours of infection and is not blocked by antiviral agents, suggesting that it is initiated by the VPR carried into the virion. Additionally, VPR induces apoptosis in a cell cycle dependent manner suggesting that these two effects are mechanistically linked. Detected in the serum and cerebrospinal fluid of AIDS patient, VPR may also induce cell death to bystander cells. Its function is as follows. During virus entry, plays a role in the transport of the viral pre-integration (PIC) complex to the host nucleus. This function is crucial for viral infection of non-dividing macrophages. May act directly at the nuclear pore complex, by binding nucleoporins phenylalanine-glycine (FG)-repeat regions. This chain is Protein Vpr, found in Homo sapiens (Human).